A 1236-amino-acid chain; its full sequence is ABC transporter B family member 9 (1236 aa).

One can recognise an ABC transmembrane type-1 1 domain in the interval 33–320 (MTVGTIAAAG…TSPSLNAFAA (288 aa)). 6 consecutive transmembrane segments (helical) span residues 38-58 (IAAA…GQLI), 80-100 (FIYL…CWMV), 158-178 (QLLC…PLLA), 179-199 (GVLC…SLIM), 257-277 (ISGF…GLAV), and 288-308 (GYNG…GMSL). One can recognise an ABC transporter 1 domain in the interval 355–591 (IELKDVYFRY…PEGAYSQLVR (237 aa)). ATP is bound at residue 390-397 (GQSGSGKS). N542 carries N-linked (GlcNAc...) asparagine glycosylation. The segment at 593–616 (QEGSKEEATESERPETSLDVERSG) is disordered. The span at 594–616 (EGSKEEATESERPETSLDVERSG) shows a compositional bias: basic and acidic residues. Residues N631 and N653 are each glycosylated (N-linked (GlcNAc...) asparagine). 6 consecutive transmembrane segments (helical) span residues 685-705 (VLVL…IFGL), 725-745 (SHFW…MIPV), 785-805 (SLVG…TTGL), 806-826 (IIAF…SPFI), 902-922 (FSFF…AGLI), and 927-947 (ATFG…IGVS). The ABC transmembrane type-1 2 domain maps to 686 to 958 (LVLGSIAAMV…TSAMAPDSNK (273 aa)). In terms of domain architecture, ABC transporter 2 spans 993-1230 (IEFRHVSFRY…SGGAYASLVT (238 aa)). Residue 1028 to 1035 (GESGSGKS) participates in ATP binding. N1082 and N1181 each carry an N-linked (GlcNAc...) asparagine glycan.

This sequence belongs to the ABC transporter superfamily. ABCB family. Multidrug resistance exporter (TC 3.A.1.201) subfamily.

The protein localises to the membrane. The protein is ABC transporter B family member 9 (ABCB9) of Arabidopsis thaliana (Mouse-ear cress).